The primary structure comprises 480 residues: Glutamate--tRNA ligase (480 aa).

The 'HIGH' region motif lies at 21 to 31; sequence PSPTGYLHVGG. Residues C110, C112, C137, and H139 each contribute to the Zn(2+) site. Residues 248–252 carry the 'KMSKS' region motif; the sequence is KLSKR. Residue K251 coordinates ATP.

Belongs to the class-I aminoacyl-tRNA synthetase family. Glutamate--tRNA ligase type 1 subfamily. As to quaternary structure, monomer. Zn(2+) serves as cofactor.

The protein resides in the cytoplasm. It catalyses the reaction tRNA(Glu) + L-glutamate + ATP = L-glutamyl-tRNA(Glu) + AMP + diphosphate. In terms of biological role, catalyzes the attachment of glutamate to tRNA(Glu) in a two-step reaction: glutamate is first activated by ATP to form Glu-AMP and then transferred to the acceptor end of tRNA(Glu). The sequence is that of Glutamate--tRNA ligase from Haemophilus influenzae (strain PittEE).